Here is a 409-residue protein sequence, read N- to C-terminus: uncharacterized protein (409 aa).

In terms of domain architecture, OBG-type G spans 5-274 (ILIGFVGKPS…LAKQGFVKYE (270 aa)). Residues 11-18 (GKPSSGKS) and 83-87 (DVAGL) each bind GTP.

The protein belongs to the TRAFAC class OBG-HflX-like GTPase superfamily. OBG GTPase family.

The protein resides in the cytoplasm. The protein localises to the nucleus. This is an uncharacterized protein from Schizosaccharomyces pombe (strain 972 / ATCC 24843) (Fission yeast).